The chain runs to 734 residues: Polyribonucleotide nucleotidyltransferase (734 aa).

Residues Asp-505 and Asp-511 each coordinate Mg(2+). A KH domain is found at 572–631 (PKLTTIQIPVDAIGMVIGKGGETIRSITEETGAEINIEDDGTVTIASASGEGASAALETI). In terms of domain architecture, S1 motif spans 641-715 (GTVYSGKVRD…GKTRFALSIK (75 aa)).

Belongs to the polyribonucleotide nucleotidyltransferase family. Mg(2+) serves as cofactor.

It localises to the cytoplasm. It catalyses the reaction RNA(n+1) + phosphate = RNA(n) + a ribonucleoside 5'-diphosphate. In terms of biological role, involved in mRNA degradation. Catalyzes the phosphorolysis of single-stranded polyribonucleotides processively in the 3'- to 5'-direction. This chain is Polyribonucleotide nucleotidyltransferase, found in Prosthecochloris aestuarii (strain DSM 271 / SK 413).